Consider the following 242-residue polypeptide: MSKSRLTVFSFVRRFLLLLMVVLAVFWGGGIALFSVAPVPFSAVMVERQVSAWLHGNFRYVAHSDWVSMDQISPWMGLAVIAAEDQKFSEHWGFDVASIEKALAHNERNENRIRGASTISQQTAKNLFLWDGRSWVRKGLEAGLTLGIETVWSKKRILTVYLNIAEFGDGVFGVEAAAQRYFHKPASKLTRSEAALLAAVLPNPLRFKVSSPSGYVRSRQAWILRQMYQLGGEPFMQQHQLD.

The helical transmembrane segment at 15 to 35 (FLLLLMVVLAVFWGGGIALFS) threads the bilayer.

It belongs to the glycosyltransferase 51 family.

Its subcellular location is the cell inner membrane. It catalyses the reaction [GlcNAc-(1-&gt;4)-Mur2Ac(oyl-L-Ala-gamma-D-Glu-L-Lys-D-Ala-D-Ala)](n)-di-trans,octa-cis-undecaprenyl diphosphate + beta-D-GlcNAc-(1-&gt;4)-Mur2Ac(oyl-L-Ala-gamma-D-Glu-L-Lys-D-Ala-D-Ala)-di-trans,octa-cis-undecaprenyl diphosphate = [GlcNAc-(1-&gt;4)-Mur2Ac(oyl-L-Ala-gamma-D-Glu-L-Lys-D-Ala-D-Ala)](n+1)-di-trans,octa-cis-undecaprenyl diphosphate + di-trans,octa-cis-undecaprenyl diphosphate + H(+). It functions in the pathway cell wall biogenesis; peptidoglycan biosynthesis. Peptidoglycan polymerase that catalyzes glycan chain elongation from lipid-linked precursors. This chain is Biosynthetic peptidoglycan transglycosylase, found in Shigella sonnei (strain Ss046).